The chain runs to 253 residues: Ubiquinone/menaquinone biosynthesis C-methyltransferase UbiE (253 aa).

Residues T76, D97, 125 to 126, and S142 each bind S-adenosyl-L-methionine; that span reads NA.

The protein belongs to the class I-like SAM-binding methyltransferase superfamily. MenG/UbiE family.

The enzyme catalyses a 2-demethylmenaquinol + S-adenosyl-L-methionine = a menaquinol + S-adenosyl-L-homocysteine + H(+). The catalysed reaction is a 2-methoxy-6-(all-trans-polyprenyl)benzene-1,4-diol + S-adenosyl-L-methionine = a 5-methoxy-2-methyl-3-(all-trans-polyprenyl)benzene-1,4-diol + S-adenosyl-L-homocysteine + H(+). The protein operates within quinol/quinone metabolism; menaquinone biosynthesis; menaquinol from 1,4-dihydroxy-2-naphthoate: step 2/2. It participates in cofactor biosynthesis; ubiquinone biosynthesis. In terms of biological role, methyltransferase required for the conversion of demethylmenaquinol (DMKH2) to menaquinol (MKH2) and the conversion of 2-polyprenyl-6-methoxy-1,4-benzoquinol (DDMQH2) to 2-polyprenyl-3-methyl-6-methoxy-1,4-benzoquinol (DMQH2). This is Ubiquinone/menaquinone biosynthesis C-methyltransferase UbiE from Xylella fastidiosa (strain M23).